Reading from the N-terminus, the 251-residue chain is Probable transcriptional regulatory protein BLD_0450 (251 aa).

It belongs to the TACO1 family.

The protein resides in the cytoplasm. This chain is Probable transcriptional regulatory protein BLD_0450, found in Bifidobacterium longum (strain DJO10A).